The chain runs to 315 residues: ATP synthase gamma chain (315 aa).

The protein belongs to the ATPase gamma chain family. F-type ATPases have 2 components, CF(1) - the catalytic core - and CF(0) - the membrane proton channel. CF(1) has five subunits: alpha(3), beta(3), gamma(1), delta(1), epsilon(1). CF(0) has three main subunits: a, b and c.

The protein resides in the cellular thylakoid membrane. In terms of biological role, produces ATP from ADP in the presence of a proton gradient across the membrane. The gamma chain is believed to be important in regulating ATPase activity and the flow of protons through the CF(0) complex. This Microcystis aeruginosa (strain NIES-843 / IAM M-2473) protein is ATP synthase gamma chain.